A 311-amino-acid chain; its full sequence is Putative tenascin-XA (311 aa).

Disordered stretches follow at residues 1–47 (MEDK…EPRL) and 124–150 (LSAE…SQLS). Fibronectin type-III domains lie at 41-135 (PPEE…LAPA), 145-249 (RLSQ…SPRD), and 250-311 (LQFS…SCVH).

As to expression, expressed in the adrenal gland.

The protein is Putative tenascin-XA (TNXA) of Homo sapiens (Human).